Reading from the N-terminus, the 129-residue chain is Putative redox protein FMP46, mitochondrial (129 aa).

A mitochondrion-targeting transit peptide spans M1–L21. C94 is an active-site residue.

It belongs to the FMP46 family.

The protein resides in the mitochondrion. Putative mitochondrial redox protein which could be involved in the reduction of small toxic molecules. This chain is Putative redox protein FMP46, mitochondrial (FMP46), found in Candida glabrata (strain ATCC 2001 / BCRC 20586 / JCM 3761 / NBRC 0622 / NRRL Y-65 / CBS 138) (Yeast).